We begin with the raw amino-acid sequence, 118 residues long: Large ribosomal subunit protein uL18 (118 aa).

The interval 1–25 is disordered; that stretch reads MITKPDKNKVRQKRHRRVRGKLSGT. A compositionally biased stretch (basic residues) spans 10-20; sequence VRQKRHRRVRG.

Belongs to the universal ribosomal protein uL18 family. Part of the 50S ribosomal subunit; part of the 5S rRNA/L5/L18/L25 subcomplex. Contacts the 5S and 23S rRNAs.

This is one of the proteins that bind and probably mediate the attachment of the 5S RNA into the large ribosomal subunit, where it forms part of the central protuberance. The polypeptide is Large ribosomal subunit protein uL18 (Streptococcus gordonii (strain Challis / ATCC 35105 / BCRC 15272 / CH1 / DL1 / V288)).